A 465-amino-acid polypeptide reads, in one-letter code: MLPLVALVGRPNVGKSTLFNALTLTRDALVHDQPGVTRDRHYGVCRIDGQPLFAVVDTGGMVGKEDGLAGATARQARLAAAEADVVLFVVNVREGVSALDDDILAWLRKLSQPTLLVINKIDGVSDATVHSEFAHYGFSDVVPVSAAHRQGLDDLIEQVLAWLPERGIGEALDEDSERIHIAFVGRPNVGKSTLVNRLLGEERMIVSDVPGTTRDSITVDLERDECRYRLVDTAGLRRKSKVEEAVEKFSAFKTLQVIEQCQVAVLLLDAGEGVTDQDATVLAAILDAGKALVVAMNKWDGLGTYQREQAEDLLSRKLGFVNWAEVVRLSAKHGSGLRELFRAIHRAHVSALRQFSTSEVNKALEIAYQTAPPPSIRGHVSKLRYVHPAGSNPPTFIVHGTRLKVLPDTYKRYLENFFRKRFKLVGTPVRFLFREGDNPYEGRKNVLSERQIQRRRRLMRHVKRK.

EngA-type G domains follow at residues 3–167 (PLVA…PERG) and 179–352 (IHIA…VSAL). GTP contacts are provided by residues 9–16 (GRPNVGKS), 57–61 (DTGGM), 119–122 (NKID), 185–192 (GRPNVGKS), 232–236 (DTAGL), and 297–300 (NKWD). The region spanning 353–437 (RQFSTSEVNK…PVRFLFREGD (85 aa)) is the KH-like domain.

The protein belongs to the TRAFAC class TrmE-Era-EngA-EngB-Septin-like GTPase superfamily. EngA (Der) GTPase family. Associates with the 50S ribosomal subunit.

GTPase that plays an essential role in the late steps of ribosome biogenesis. The sequence is that of GTPase Der from Xylella fastidiosa (strain 9a5c).